The primary structure comprises 417 residues: D-inositol 3-phosphate glycosyltransferase (417 aa).

1D-myo-inositol 3-phosphate is bound at residue H10. UDP-N-acetyl-alpha-D-glucosamine-binding positions include Q16–P17 and G24. Residues D21–N26, K79, Y112, T136, and R156 contribute to the 1D-myo-inositol 3-phosphate site. UDP-N-acetyl-alpha-D-glucosamine contacts are provided by R230, K235, and Q296. 3 residues coordinate Mg(2+): Y305, R306, and A308. The UDP-N-acetyl-alpha-D-glucosamine site is built by E318 and E326. T332 is a Mg(2+) binding site.

This sequence belongs to the glycosyltransferase group 1 family. MshA subfamily. In terms of assembly, homodimer.

It carries out the reaction 1D-myo-inositol 3-phosphate + UDP-N-acetyl-alpha-D-glucosamine = 1D-myo-inositol 2-acetamido-2-deoxy-alpha-D-glucopyranoside 3-phosphate + UDP + H(+). Catalyzes the transfer of a N-acetyl-glucosamine moiety to 1D-myo-inositol 3-phosphate to produce 1D-myo-inositol 2-acetamido-2-deoxy-glucopyranoside 3-phosphate in the mycothiol biosynthesis pathway. The polypeptide is D-inositol 3-phosphate glycosyltransferase (Actinosynnema mirum (strain ATCC 29888 / DSM 43827 / JCM 3225 / NBRC 14064 / NCIMB 13271 / NRRL B-12336 / IMRU 3971 / 101)).